Reading from the N-terminus, the 743-residue chain is Phosphoribosylformylglycinamidine synthase subunit PurL (743 aa).

His50 is an active-site residue. ATP-binding residues include Tyr53 and Lys92. Residue Glu94 coordinates Mg(2+). Substrate-binding positions include 95–98 and Arg117; that span reads SHNH. His96 serves as the catalytic Proton acceptor. Asp118 lines the Mg(2+) pocket. Gln241 is a binding site for substrate. Asp269 contributes to the Mg(2+) binding site. 313-315 is a binding site for substrate; the sequence is ESQ. ATP contacts are provided by Asp495 and Gly532. Residue Asn533 participates in Mg(2+) binding. Position 535 (Ser535) interacts with substrate.

This sequence belongs to the FGAMS family. In terms of assembly, monomer. Part of the FGAM synthase complex composed of 1 PurL, 1 PurQ and 2 PurS subunits.

The protein resides in the cytoplasm. It catalyses the reaction N(2)-formyl-N(1)-(5-phospho-beta-D-ribosyl)glycinamide + L-glutamine + ATP + H2O = 2-formamido-N(1)-(5-O-phospho-beta-D-ribosyl)acetamidine + L-glutamate + ADP + phosphate + H(+). Its pathway is purine metabolism; IMP biosynthesis via de novo pathway; 5-amino-1-(5-phospho-D-ribosyl)imidazole from N(2)-formyl-N(1)-(5-phospho-D-ribosyl)glycinamide: step 1/2. Functionally, part of the phosphoribosylformylglycinamidine synthase complex involved in the purines biosynthetic pathway. Catalyzes the ATP-dependent conversion of formylglycinamide ribonucleotide (FGAR) and glutamine to yield formylglycinamidine ribonucleotide (FGAM) and glutamate. The FGAM synthase complex is composed of three subunits. PurQ produces an ammonia molecule by converting glutamine to glutamate. PurL transfers the ammonia molecule to FGAR to form FGAM in an ATP-dependent manner. PurS interacts with PurQ and PurL and is thought to assist in the transfer of the ammonia molecule from PurQ to PurL. This is Phosphoribosylformylglycinamidine synthase subunit PurL from Rhizobium leguminosarum bv. trifolii (strain WSM2304).